Reading from the N-terminus, the 706-residue chain is uncharacterized protein (706 aa).

This is an uncharacterized protein from Rickettsia prowazekii (strain Madrid E).